Consider the following 150-residue polypeptide: Large ribosomal subunit protein bL9 (150 aa).

This sequence belongs to the bacterial ribosomal protein bL9 family.

Its function is as follows. Binds to the 23S rRNA. This is Large ribosomal subunit protein bL9 from Idiomarina loihiensis (strain ATCC BAA-735 / DSM 15497 / L2-TR).